The chain runs to 588 residues: L-fucose isomerase (588 aa).

Residues glutamate 335 and aspartate 359 each act as proton acceptor in the active site. Glutamate 335, aspartate 359, and histidine 525 together coordinate Mn(2+).

Belongs to the L-fucose isomerase family. It depends on Mn(2+) as a cofactor.

It is found in the cytoplasm. The enzyme catalyses L-fucose = L-fuculose. The protein operates within carbohydrate degradation; L-fucose degradation; L-lactaldehyde and glycerone phosphate from L-fucose: step 1/3. Its function is as follows. Converts the aldose L-fucose into the corresponding ketose L-fuculose. The sequence is that of L-fucose isomerase from Streptococcus pneumoniae (strain Hungary19A-6).